A 710-amino-acid chain; its full sequence is Polyribonucleotide nucleotidyltransferase (710 aa).

The Mg(2+) site is built by aspartate 485 and aspartate 491. Residues 552 to 611 enclose the KH domain; that stretch reads PKILTLTINPDKIRDVIGPSGKVINKIIEETGVKIDIEQDGTVYISSLDTAMNQKAKQII. In terms of domain architecture, S1 motif spans 621–689; the sequence is GETYHGKVKR…NQGRVNLSRK (69 aa).

The protein belongs to the polyribonucleotide nucleotidyltransferase family. Mg(2+) serves as cofactor.

It is found in the cytoplasm. The catalysed reaction is RNA(n+1) + phosphate = RNA(n) + a ribonucleoside 5'-diphosphate. In terms of biological role, involved in mRNA degradation. Catalyzes the phosphorolysis of single-stranded polyribonucleotides processively in the 3'- to 5'-direction. The protein is Polyribonucleotide nucleotidyltransferase of Shouchella clausii (strain KSM-K16) (Alkalihalobacillus clausii).